The sequence spans 768 residues: MTETTALASSTVSSAPLSLDLIITCADGLEAPLQTELTSFGIASEMKSTGRLAVTGTLRDLYKICLWSRVASRVLMLIKRKNINAEYDVAEQLYGLAKSVNWTEQFSLEQTFAIRLSVDKRVAVSQQFAMLRIKDAIADTFNEVYESRPNVDSKNPDFSIFATVNDKQAELYLDLSGTSLHRRGYRVAMTEAPLKENLAAALLYSAGWHQKNEAGDAPFYNALIDPMCGSGTFIIEALLMHCDYAVGIDKAANQFGFYEWQHHDAALWQEMIDDAQTRFRAALEIANEQPDTLPLIFGFDADNGAIIATEKNLIAAGLQDLLPLLDIETRALDQLSTLLKPLVADGRLSNPLIITNPPYGERLGDEEMIKPLYQSIGLILQDSFAGSGVDPMLGILASHVEQVDILPIREPKTLRCHNGAITVYFRYGTLIAGQTGNLVNRFEKREIEVEDGQDFINRLQKNLTRLKKLAKKDNVSNIRVYNADLPDFKVAIDLYGDYAHVQEYAPPKTIPPETAKKRFNLALMGIREVFGINREQIFIKTRARQSGNDQYSKQGNTEKRGKFYIAREDGAYLYVNFTDYLDTGLFIDHRNMRARIKDNSRNKSVLNLFAYTCTASVHAALAGAKKVTSVDLSQNYLDWGKQNFALNGLNVSGNKYQFVAADIFEWIKDNTEQFDIIFIDPPTFSNSKKFQGTFDVQRDHAALINRAMNRLTADGILYFSNNFTRFELDEQLTERYDIVDITQKTIGFDFDIKKPIHQSFEIRHRQSI.

The region spanning 60 to 175 is the THUMP domain; it reads DLYKICLWSR…DKQAELYLDL (116 aa).

This sequence belongs to the methyltransferase superfamily. RlmKL family.

It localises to the cytoplasm. The enzyme catalyses guanosine(2445) in 23S rRNA + S-adenosyl-L-methionine = N(2)-methylguanosine(2445) in 23S rRNA + S-adenosyl-L-homocysteine + H(+). It carries out the reaction guanosine(2069) in 23S rRNA + S-adenosyl-L-methionine = N(2)-methylguanosine(2069) in 23S rRNA + S-adenosyl-L-homocysteine + H(+). Its function is as follows. Specifically methylates the guanine in position 2445 (m2G2445) and the guanine in position 2069 (m7G2069) of 23S rRNA. The protein is Ribosomal RNA large subunit methyltransferase K/L of Psychrobacter arcticus (strain DSM 17307 / VKM B-2377 / 273-4).